The chain runs to 134 residues: DNA-directed RNA polymerase subunit omega (134 aa).

Belongs to the RNA polymerase subunit omega family. In terms of assembly, the RNAP catalytic core consists of 2 alpha, 1 beta, 1 beta' and 1 omega subunit. When a sigma factor is associated with the core the holoenzyme is formed, which can initiate transcription.

It carries out the reaction RNA(n) + a ribonucleoside 5'-triphosphate = RNA(n+1) + diphosphate. Promotes RNA polymerase assembly. Latches the N- and C-terminal regions of the beta' subunit thereby facilitating its interaction with the beta and alpha subunits. This is DNA-directed RNA polymerase subunit omega from Rhizobium etli (strain CIAT 652).